The sequence spans 399 residues: Argininosuccinate synthase (399 aa).

Position 9-17 (9-17 (AYSGGLDTS)) interacts with ATP. Y85 is a binding site for L-citrulline. Residue G115 participates in ATP binding. T117, N121, and D122 together coordinate L-aspartate. L-citrulline is bound at residue N121. L-citrulline-binding residues include R125, S173, E258, and Y270.

Belongs to the argininosuccinate synthase family. Type 1 subfamily. Homotetramer.

The protein localises to the cytoplasm. The enzyme catalyses L-citrulline + L-aspartate + ATP = 2-(N(omega)-L-arginino)succinate + AMP + diphosphate + H(+). It functions in the pathway amino-acid biosynthesis; L-arginine biosynthesis; L-arginine from L-ornithine and carbamoyl phosphate: step 2/3. In Streptococcus thermophilus (strain CNRZ 1066), this protein is Argininosuccinate synthase.